A 167-amino-acid polypeptide reads, in one-letter code: NAD(P)H-quinone oxidoreductase subunit I, chloroplastic (167 aa).

4Fe-4S ferredoxin-type domains lie at 55–84 (GRIHFEFDKCIACEVCVRVCPIDLPVVDWK) and 95–124 (LNYSIDFGICIFCGNCVEYCPTNCLSMTEE). Positions 64, 67, 70, 74, 104, 107, 110, and 114 each coordinate [4Fe-4S] cluster.

This sequence belongs to the complex I 23 kDa subunit family. As to quaternary structure, NDH is composed of at least 16 different subunits, 5 of which are encoded in the nucleus. [4Fe-4S] cluster is required as a cofactor.

It localises to the plastid. The protein localises to the chloroplast thylakoid membrane. It carries out the reaction a plastoquinone + NADH + (n+1) H(+)(in) = a plastoquinol + NAD(+) + n H(+)(out). It catalyses the reaction a plastoquinone + NADPH + (n+1) H(+)(in) = a plastoquinol + NADP(+) + n H(+)(out). In terms of biological role, NDH shuttles electrons from NAD(P)H:plastoquinone, via FMN and iron-sulfur (Fe-S) centers, to quinones in the photosynthetic chain and possibly in a chloroplast respiratory chain. The immediate electron acceptor for the enzyme in this species is believed to be plastoquinone. Couples the redox reaction to proton translocation, and thus conserves the redox energy in a proton gradient. The chain is NAD(P)H-quinone oxidoreductase subunit I, chloroplastic from Morus indica (Mulberry).